The primary structure comprises 208 residues: Large ribosomal subunit protein uL4 (208 aa).

Positions 45-95 (RQGTHKAKTRSEVRGGGKKPFRQKGTGNARQGSSRSPIHVGGGTIFGPQPH) are disordered. Over residues 69–80 (GTGNARQGSSRS) the composition is skewed to polar residues.

This sequence belongs to the universal ribosomal protein uL4 family. Part of the 50S ribosomal subunit.

Functionally, one of the primary rRNA binding proteins, this protein initially binds near the 5'-end of the 23S rRNA. It is important during the early stages of 50S assembly. It makes multiple contacts with different domains of the 23S rRNA in the assembled 50S subunit and ribosome. In terms of biological role, forms part of the polypeptide exit tunnel. In Chlorobium chlorochromatii (strain CaD3), this protein is Large ribosomal subunit protein uL4.